The chain runs to 1470 residues: Membrane-associated guanylate kinase, WW and PDZ domain-containing protein 3 (1470 aa).

Residues 18 to 108 (CAVSWAGPPG…PIRLKTVKPG (91 aa)) enclose the PDZ 1 domain. The tract at residues 18–108 (CAVSWAGPPG…PIRLKTVKPG (91 aa)) is interaction with ADRB1 and TGFA. One can recognise a Guanylate kinase-like domain in the interval 116–290 (RHYLSLQFQK…RSMDFRNYMM (175 aa)). Residue 123–130 (FQKGSIDH) coordinates ATP. A disordered region spans residues 184-266 (TYDGNFYGTP…ETREMHSESS (83 aa)). The segment covering 193–204 (PKPPAEPSPFQP) has biased composition (pro residues). Position 236 is a phosphoserine (serine 236). Residues 238-247 (LPEEEEDEDK) show a composition bias toward acidic residues. WW domains lie at 296–329 (EPLP…DPRL) and 342–375 (GELP…NPVE). One can recognise a PDZ 2 domain in the interval 413 to 495 (RASLKKSTMG…NQYVNLTLCR (83 aa)). The interaction with PTEN stretch occupies residues 413–495 (RASLKKSTMG…NQYVNLTLCR (83 aa)). Positions 550-575 (LLSSDRLNGPSDSNEQRASLASSGSS) are disordered. The span at 559–575 (PSDSNEQRASLASSGSS) shows a compositional bias: polar residues. One can recognise a PDZ 3 domain in the interval 581–657 (TIPLVKGPKG…GADVPLLILR (77 aa)). Serine 598 is subject to Phosphoserine. The tract at residues 665-700 (KTAKMKTDTKETSGSLETINEPTPQPMPFPPSIIRS) is disordered. Positions 676 to 686 (TSGSLETINEP) are enriched in polar residues. Position 702 is a phosphoserine (serine 702). Residues 729–811 (DVFLRKQESG…NGHVLLTVRR (83 aa)) enclose the PDZ 4 domain. The segment at 729-811 (DVFLRKQESG…NGHVLLTVRR (83 aa)) is interaction with ADGRB1. The disordered stretch occupies residues 818-847 (KQPEDESPQAFSQSGSPRLNRTELPTRSAP). Residues 826–847 (QAFSQSGSPRLNRTELPTRSAP) are compositionally biased toward polar residues. A phosphoserine mark is found at serine 833 and serine 916. Residues 852-939 (DVILQRKENE…TVTLTVVAEE (88 aa)) form the PDZ 5 domain. The interaction with LPAR2 and GRIN2B stretch occupies residues 852–939 (DVILQRKENE…TVTLTVVAEE (88 aa)). The tract at residues 939–976 (EEHHGPPSGTNSARQSPALQHRPMGQAQATHIPGDRTA) is disordered. Residues 946–956 (SGTNSARQSPA) are compositionally biased toward polar residues. Residues 1022 to 1104 (PVELERGPRG…KVLLLLRPGT (83 aa)) form the PDZ 6 domain. Disordered stretches follow at residues 1124 to 1146 (IYDE…ESHV) and 1167 to 1470 (DTVQ…DKQL). Over residues 1175 to 1191 (TLNGSQPEMKYQSIQKN) the composition is skewed to polar residues. Composition is skewed to basic and acidic residues over residues 1193–1209 (SKKD…KNLL) and 1230–1263 (RHSE…KGEN). Polar residues predominate over residues 1285–1304 (SSSPRKQQKIGGNSLSNTEG). Serine 1321 is modified (phosphoserine). 4 stretches are compositionally biased toward basic and acidic residues: residues 1326-1340 (PEGK…KDLK), 1350-1361 (RSPEKRSSKVDE), 1377-1397 (VSEK…DKTG), and 1422-1431 (EVTDRGKERA).

The protein belongs to the MAGUK family. Interacts with ADRB1, ADGRB1, LPAR2/EDG4, FZD4, FZD7, GRIN2B, TGFA and VANGL2. Interacts with PTEN. Interacts with ADRB1, PTPRB and unidentified tyrosine phosphorylated proteins. Interacts with DLL1. Interacts with PRRG4 (via cytoplasmic domain).

It is found in the cell membrane. It localises to the cell junction. The protein localises to the tight junction. The protein resides in the nucleus. In terms of biological role, acts as a scaffolding protein at cell-cell junctions, thereby regulating various cellular and signaling processes. Cooperates with PTEN to modulate the kinase activity of AKT1. Its interaction with PTPRB and tyrosine phosphorylated proteins suggests that it may link receptor tyrosine phosphatase with its substrates at the plasma membrane. In polarized epithelial cells, involved in efficient trafficking of TGFA to the cell surface. Regulates the ability of LPAR2 to activate ERK and RhoA pathways. Regulates the JNK signaling cascade via its interaction with FZD4 and VANGL2. The chain is Membrane-associated guanylate kinase, WW and PDZ domain-containing protein 3 (Magi3) from Rattus norvegicus (Rat).